The sequence spans 312 residues: Short chain dehydrogenase pgmD (312 aa).

NADP(+)-binding residues include Val46, Ile47, Lys171, Tyr207, Lys211, and Thr242. Tyr207 (proton donor) is an active-site residue. Residue Lys211 is the Lowers pKa of active site Tyr of the active site.

The protein belongs to the short-chain dehydrogenases/reductases (SDR) family.

It functions in the pathway pigment biosynthesis. The protein operates within secondary metabolite biosynthesis. Short chain dehydrogenase; part of the gene cluster that mediates the biosynthesis of pleosporalin A, ascomycone A, as well as a third cryptic naphthoquinone derived pigment, all responsible for the coloration of conidia. Essential for the production of pleosporalin A, but not the 2 other final products. The pathway begins with the biosynthesis of the cyclized heptaketide 3-acetonyl-1,6,8-trihydroxy-2-naphthaldehyde by the NR-PKS pgmA. The C-6 hydroxyl group is further methylated by the O-methyltransferase pgmB to yield fusarubinaldehyde which is in turn oxidized by the cytochrome P450 monooxygenase pgmC at C-9. The C-1 hydroxyl group is then methylated spontaneously. Although pgmE, pgmD and pgmH are essential for the production of pleosporalin A, it is not the case for the 2 other final products and it remains difficult to assign a specific function to each enzyme. PgmF and pgmG seem not to be involved in pigment biosynthesis although they were regulated by the cluster-specific transcription factor pgmR. This chain is Short chain dehydrogenase pgmD, found in Aspergillus terreus.